An 87-amino-acid polypeptide reads, in one-letter code: LYR motif-containing protein 2 (87 aa).

Residues Met-1–Gln-19 constitute a mitochondrion transit peptide.

Belongs to the complex I LYR family.

It localises to the mitochondrion. In terms of biological role, involved in efficient integration of the N-module into mitochondrial respiratory chain complex I. This chain is LYR motif-containing protein 2 (lyrm2), found in Xenopus tropicalis (Western clawed frog).